Reading from the N-terminus, the 293-residue chain is Probable endonuclease 4 (293 aa).

His78, His118, Glu154, Asp188, His191, His225, Asp238, His240, and Glu270 together coordinate Zn(2+).

Belongs to the AP endonuclease 2 family. Requires Zn(2+) as cofactor.

It carries out the reaction Endonucleolytic cleavage to 5'-phosphooligonucleotide end-products.. Its function is as follows. Endonuclease IV plays a role in DNA repair. It cleaves phosphodiester bonds at apurinic or apyrimidinic (AP) sites, generating a 3'-hydroxyl group and a 5'-terminal sugar phosphate. This is Probable endonuclease 4 from Vibrio vulnificus (strain CMCP6).